The following is a 367-amino-acid chain: Pectate trisaccharide-lyase (367 aa).

An N-terminal signal peptide occupies residues 1-27 (MLMRFSRVVSLVLLLVFTAVLTGAVKA). D144, D166, and D170 together coordinate Ca(2+). A PbH1 1 repeat occupies 151-173 (SHHIWIDHCTFVNGNDGAVDIKK). The active site involves R224. The PbH1 2 repeat unit spans residues 263–289 (GAKVHVEGNYFMGYGAVMAEAGIAFLP).

This sequence belongs to the polysaccharide lyase 1 family. In terms of assembly, homotetramer. It depends on Ca(2+) as a cofactor.

It is found in the secreted. The catalysed reaction is eliminative cleavage of unsaturated trigalacturonate as the major product from the reducing end of polygalacturonic acid/pectate.. Its activity is regulated as follows. Completely inactivated by EGTA. In terms of biological role, cleaves unsaturated trigalacturonate from pectin. Activity is highest towards polygalacturonic acid, activity on methylated pectins decreases with an increasing degree of methylation. The polypeptide is Pectate trisaccharide-lyase (Thermotoga maritima (strain ATCC 43589 / DSM 3109 / JCM 10099 / NBRC 100826 / MSB8)).